We begin with the raw amino-acid sequence, 471 residues long: Putative multidrug resistance protein MdtD (471 aa).

Topologically, residues 1–12 (MTDLPDSTRWQL) are periplasmic. Residues 13–33 (WIVAFGFFMQSLDTTIVNTAI) form a helical membrane-spanning segment. At 34–48 (PSMAQSLGESPLHMH) the chain is on the cytoplasmic side. Residues 49–69 (MVIVSYVLTVAVMLPASGWLA) form a helical membrane-spanning segment. Over 70–76 (DKVGVRN) the chain is Periplasmic. The chain crosses the membrane as a helical span at residues 77–97 (IFFTAIVLFTLGSLFCALSGT). The Cytoplasmic segment spans residues 98–101 (LNEL). Residues 102-124 (LLARALQGVGGAMMVPVGRLTVM) traverse the membrane as a helical segment. The Periplasmic segment spans residues 125 to 137 (KIVPREQYMAAMT). A helical membrane pass occupies residues 138–158 (FVTLPGQVGPLLGPALGGLLV). Residues 159–164 (EYASWH) are Cytoplasmic-facing. Residues 165–185 (WIFLINIPVGIIGAIATLMLM) form a helical membrane-spanning segment. Over 186–196 (PNYTMQTRRFD) the chain is Periplasmic. The helical transmembrane segment at 197–217 (LSGFLLLAVGMAVLTLALDGS) threads the bilayer. The Cytoplasmic segment spans residues 218-224 (KGTGLSP). A helical transmembrane segment spans residues 225-245 (LAIAGLVAVGVVALVLYLLHA). The Periplasmic portion of the chain corresponds to 246–262 (RNNNRALFSLKLFRTRT). A helical transmembrane segment spans residues 263-283 (FSLGLAGSFAGRIGSGMLPFM). Residues 284 to 285 (TP) lie on the Cytoplasmic side of the membrane. The chain crosses the membrane as a helical span at residues 286-306 (VFLQIGLGFSPFHAGLMMIPM). Topologically, residues 307–341 (VLGSMGMKRIVVQVVNRFGYRRVLVATTLGLSLVT) are periplasmic. Residues 342-362 (LLFMTTALLGWYYVLPFVLFL) traverse the membrane as a helical segment. Over 363–395 (QGMVNSTRFSSMNTLTLKDLPDNLASSGNSLLS) the chain is Cytoplasmic. Residues 396–416 (MIMQLSMSIGVTIAGLLLGLF) traverse the membrane as a helical segment. At 417–430 (GSQHVSVDSGTTQT) the chain is on the periplasmic side. A helical membrane pass occupies residues 431 to 451 (VFMYTWLSMAFIIALPAFIFA). Residues 452–471 (RVPNDTHQNVAISRRKRSAQ) lie on the Cytoplasmic side of the membrane.

This sequence belongs to the major facilitator superfamily. TCR/Tet family.

It localises to the cell inner membrane. This is Putative multidrug resistance protein MdtD from Shigella flexneri serotype 5b (strain 8401).